Reading from the N-terminus, the 210-residue chain is Outer-membrane lipoprotein LolB (210 aa).

The N-terminal stretch at 1 to 29 (MSLISNNEERSLRVRYCIAIALSALLISG) is a signal peptide. Residue Cys30 is the site of N-palmitoyl cysteine attachment. Cys30 carries the S-diacylglycerol cysteine lipid modification.

This sequence belongs to the LolB family. Monomer.

The protein resides in the cell outer membrane. In terms of biological role, plays a critical role in the incorporation of lipoproteins in the outer membrane after they are released by the LolA protein. The protein is Outer-membrane lipoprotein LolB of Coxiella burnetii (strain CbuK_Q154) (Coxiella burnetii (strain Q154)).